The following is a 425-amino-acid chain: MNNIVIVGLQWGDEGKGKIVDYLSENADVVVRFQGGNNAGHTIVVDDEVYKLNLLPSAVLRPGKISIIGNGVALDPHALISEIESLKVKGVDVNYNNLMVSESCPLILSIHKDKEKLFEDLNGNHKIGTTNKGIGPCYEDKVGRRAIRLCDLENADELNKRVDILLNYHNAIRKGLNYQVVKKEEILKEIQEISEKILSYKKPVWKILNDLMKEGKKIIFEGAQGAFLDIDHGTYPFVTSSNTVASQAITGSGLSSNAYIIGVVKAYTTRVGNGPFPTEQKNEVGDSLFTIGKELGTVSNRRRRCGWFDAVLVRQAVQLSGVSSIVLTKLDVLNSFDTIKICTGYKYSGKMYDYLPASHSIQGELEPIYEEFPGWKENTQGKRSIETLPINLIKYIEGLEKLIGVPIHLISTSPKREDVIKLKDF.

Residues 12 to 18 (GDEGKGK) and 40 to 42 (GHT) each bind GTP. The active-site Proton acceptor is the Asp13. Mg(2+)-binding residues include Asp13 and Gly40. Residues 13 to 16 (DEGK), 38 to 41 (NAGH), Thr130, Arg144, Gln224, Thr239, and Arg301 each bind IMP. His41 serves as the catalytic Proton donor. Substrate is bound at residue 297-303 (TVSNRRR). Residues Arg303, 329 to 331 (KLD), and 411 to 413 (STS) contribute to the GTP site.

It belongs to the adenylosuccinate synthetase family. Homodimer. The cofactor is Mg(2+).

It is found in the cytoplasm. The enzyme catalyses IMP + L-aspartate + GTP = N(6)-(1,2-dicarboxyethyl)-AMP + GDP + phosphate + 2 H(+). The protein operates within purine metabolism; AMP biosynthesis via de novo pathway; AMP from IMP: step 1/2. Functionally, plays an important role in the de novo pathway of purine nucleotide biosynthesis. Catalyzes the first committed step in the biosynthesis of AMP from IMP. In Wolbachia pipientis wMel, this protein is Adenylosuccinate synthetase.